The chain runs to 471 residues: Tryptophanase (471 aa).

N6-acetyllysine occurs at positions 5, 115, and 156. The residue at position 270 (lysine 270) is an N6-(pyridoxal phosphate)lysine. Lysine 450 carries the N6-acetyllysine modification.

It belongs to the beta-eliminating lyase family. In terms of assembly, homotetramer. Pyridoxal 5'-phosphate is required as a cofactor.

It catalyses the reaction L-tryptophan + H2O = indole + pyruvate + NH4(+). The protein operates within amino-acid degradation; L-tryptophan degradation via pyruvate pathway; indole and pyruvate from L-tryptophan: step 1/1. The sequence is that of Tryptophanase from Escherichia coli O139:H28 (strain E24377A / ETEC).